We begin with the raw amino-acid sequence, 292 residues long: Diaminopimelate epimerase (292 aa).

Residues N14 and N81 each contribute to the substrate site. C90 acts as the Proton donor in catalysis. Substrate-binding positions include 91 to 92 (GN), N166, N202, and 220 to 221 (ER). Residue C229 is the Proton acceptor of the active site. A substrate-binding site is contributed by 230–231 (GT).

This sequence belongs to the diaminopimelate epimerase family. In terms of assembly, homodimer.

Its subcellular location is the cytoplasm. It catalyses the reaction (2S,6S)-2,6-diaminopimelate = meso-2,6-diaminopimelate. It participates in amino-acid biosynthesis; L-lysine biosynthesis via DAP pathway; DL-2,6-diaminopimelate from LL-2,6-diaminopimelate: step 1/1. Its function is as follows. Catalyzes the stereoinversion of LL-2,6-diaminopimelate (L,L-DAP) to meso-diaminopimelate (meso-DAP), a precursor of L-lysine and an essential component of the bacterial peptidoglycan. This chain is Diaminopimelate epimerase, found in Rhodococcus erythropolis (strain PR4 / NBRC 100887).